A 111-amino-acid polypeptide reads, in one-letter code: Disintegrin CV-11-alpha (111 aa).

Positions 1–20 are cleaved as a signal peptide; it reads MIQVLLVIICLAVFPYQGSS. Residues 21–46 constitute a propeptide that is removed on maturation; the sequence is IILESGNVNDFELVYPKKVTVLPTGA. The Disintegrin domain maps to 47-111; it reads MNSAHPCCDP…SDCPRNPWKD (65 aa). 4 disulfide bridges follow: Cys53–Cys76, Cys67–Cys73, Cys72–Cys97, and Cys85–Cys104. The short motif at 89-91 is the Cell attachment site element; it reads KGD.

It belongs to the disintegrin family. Dimeric disintegrin subfamily. As to quaternary structure, heterodimer with subunit beta; disulfide-linked. In terms of tissue distribution, expressed by the venom gland.

It is found in the secreted. Functionally, inhibits ADP-induced human platelet aggregation. Antagonist of alpha-IIb/beta-3 (ITGA2B/ITGB3). The polypeptide is Disintegrin CV-11-alpha (Cerastes vipera (Sahara sand viper)).